A 592-amino-acid chain; its full sequence is A-type ATP synthase subunit A (592 aa).

233–240 lines the ATP pocket; sequence GPFGSGKT.

This sequence belongs to the ATPase alpha/beta chains family. As to quaternary structure, has multiple subunits with at least A(3), B(3), C, D, E, F, H, I and proteolipid K(x).

It localises to the cell membrane. It carries out the reaction ATP + H2O + 4 H(+)(in) = ADP + phosphate + 5 H(+)(out). In terms of biological role, component of the A-type ATP synthase that produces ATP from ADP in the presence of a proton gradient across the membrane. The A chain is the catalytic subunit. This Saccharolobus islandicus (strain Y.N.15.51 / Yellowstone #2) (Sulfolobus islandicus) protein is A-type ATP synthase subunit A.